Here is a 2567-residue protein sequence, read N- to C-terminus: Unconventional myosin-XVIIIb (2567 aa).

The disordered stretch occupies residues 41 to 508 (LVRGTEKEAK…SRDSDQAPED (468 aa)). The segment covering 44 to 54 (GTEKEAKEARQ) has biased composition (basic and acidic residues). Residues 71–104 (SISQPNSKSSSGTRSGSQQISQDDQSSSPGSSDI) show a composition bias toward low complexity. Basic and acidic residues-rich tracts occupy residues 105–116 (LGKESEGSRSPD) and 160–176 (LDPD…HDAP). The span at 196-206 (SRTPCGSQAST) shows a compositional bias: polar residues. 3 stretches are compositionally biased toward basic and acidic residues: residues 251-265 (TELK…DRQG), 278-287 (RPGKAEKEGA), and 326-349 (SKWD…EKTG). The span at 350 to 362 (EPQTQMEKTSQVQ) shows a compositional bias: polar residues. Composition is skewed to basic and acidic residues over residues 367–377 (DDLRMGEKAGE), 410–420 (SQTEKGCEAPK), 471–485 (LEKD…KENQ), and 492–508 (EEGK…APED). The 763-residue stretch at 571–1333 (DQVEDLASLI…VISRLEKQRE (763 aa)) folds into the Myosin motor domain. Residue 660-667 (GWSGAGKT) participates in ATP binding. Positions 1208–1232 (VESRSGQESPPPPQPGRDKPGAGGP) are disordered. Residues 1213–1240 (GQESPPPPQPGRDKPGAGGPLALDIPAL) form a GPA region. Ser1216 is subject to Phosphoserine. In terms of domain architecture, IQ spans 1336–1365 (VSQSIVLFQAACKGFLSRQEFKKLKIRRLA). Coiled coils occupy residues 1396–1783 (SATI…GLIG), 1825–1961 (KTSV…STVD), and 2014–2090 (ESQQ…VASS). The tract at residues 1426–2083 (NELRQNTDLL…IRRIADLQAA (658 aa)) is tail. Ser1829 bears the Phosphoserine mark. The span at 2139-2153 (TMRTPSRQSATSSRI) shows a compositional bias: polar residues. Disordered stretches follow at residues 2139 to 2194 (TMRT…PVSP) and 2217 to 2249 (STER…PSAA). Basic and acidic residues predominate over residues 2158–2167 (INEEAGDTER). Residues 2168–2185 (TQSALALSRARSTNVHSK) show a composition bias toward polar residues. Ser2193 is modified (phosphoserine). The span at 2227-2238 (PLASRSTNTSPL) shows a compositional bias: polar residues. Phosphoserine is present on residues Ser2296 and Ser2309. Residues 2357–2376 (SRPSMGRKLSSPTTPRDMLL) form a disordered region. Ser2377 bears the Phosphoserine mark. Disordered stretches follow at residues 2444-2471 (FLPA…SQRS) and 2494-2567 (KSPE…YLQK). Residues 2494 to 2504 (KSPEPKEDPAH) are compositionally biased toward basic and acidic residues. Residues 2506–2520 (SDSSSSSGSIVSFKS) are compositionally biased toward low complexity. The segment covering 2537–2556 (GGERTSPERREPGTGRKDDD) has biased composition (basic and acidic residues).

This sequence belongs to the TRAFAC class myosin-kinesin ATPase superfamily. Myosin family. In terms of assembly, homodimer. May interact with F actin through the GPA motif (Gly/Pro/Ala-rich). As to expression, selectively expressed in cardiac and skeletal muscles. Weakly expressed in testis, pancreas, placenta, prostate, lung and thymus.

It localises to the cytoplasm. The protein resides in the nucleus. Its subcellular location is the myofibril. It is found in the sarcomere. May be involved in intracellular trafficking of the muscle cell when in the cytoplasm, whereas entering the nucleus, may be involved in the regulation of muscle specific genes. May play a role in the control of tumor development and progression; restored MYO18B expression in lung cancer cells suppresses anchorage-independent growth. The chain is Unconventional myosin-XVIIIb (MYO18B) from Homo sapiens (Human).